The primary structure comprises 348 residues: Lysophosphatidic acid receptor 2 (348 aa).

Over 1–30 the chain is Extracellular; it reads MGHCYYNETIGFFYNNSGKELSSHWRPKDV. Asn7 and Asn15 each carry an N-linked (GlcNAc...) asparagine glycan. The chain crosses the membrane as a helical span at residues 31-51; it reads VVVALGLTVSVLVLLTNLLVI. Residues 52–66 lie on the Cytoplasmic side of the membrane; that stretch reads AAIASNRRFHQPIYY. The helical transmembrane segment at 67–87 threads the bilayer; it reads LLGNLAAADLFAGVAYLFLMF. At 88–104 the chain is on the extracellular side; that stretch reads HTGPRTARLSLEGWFLR. The chain crosses the membrane as a helical span at residues 105 to 124; it reads QGLLDTSLTASVATLLAIAV. Residues 125 to 143 lie on the Cytoplasmic side of the membrane; sequence ERRRSVMAVQLHSRLPRGR. A helical membrane pass occupies residues 144–164; the sequence is VVMLIVGVWVAALGLGLLPAH. The Extracellular segment spans residues 165 to 185; that stretch reads SWHCLCALDRCSRMAPLLSRS. The helical transmembrane segment at 186–206 threads the bilayer; that stretch reads YLAVWALSSLLVFLLMVAVYT. Over 207–239 the chain is Cytoplasmic; the sequence is RIFFYVRRRVQRMAEHVSCHPRYRETTLSLVKT. Residues 240–260 form a helical membrane-spanning segment; that stretch reads VVIILGAFVVCWTPGQVVLLL. Residues 261-276 are Extracellular-facing; that stretch reads DGLGCKSCNVLAVEKY. Residues 277–294 form a helical membrane-spanning segment; it reads FLLLAEANSLVNAAVYSC. Topologically, residues 295-348 are cytoplasmic; that stretch reads RDAEMRRTFRRLLCCACLRRSTRESAHYTSSAQGGASTRIMLPENGHPLMDSTL. Residue Cys308 is the site of S-palmitoyl cysteine attachment. Positions 345–348 match the PDZ-binding motif; that stretch reads DSTL.

Belongs to the G-protein coupled receptor 1 family. Interacts with SLC9A3R2/NHERF2, MAGI3 and PLCB3. Interacts with RALA and GRK2.

It localises to the cell surface. The protein localises to the cell membrane. Its function is as follows. Receptor for lysophosphatidic acid (LPA), a mediator of diverse cellular activities. Seems to be coupled to the G(i)/G(o), G(12)/G(13), and G(q) families of heteromeric G proteins. Plays a key role in phospholipase C-beta (PLC-beta) signaling pathway. Stimulates phospholipase C (PLC) activity in a manner that is independent of RALA activation. The chain is Lysophosphatidic acid receptor 2 from Macaca fascicularis (Crab-eating macaque).